Consider the following 2002-residue polypeptide: Methylcytosine dioxygenase TET2 (2002 aa).

Residues 1–11 (MEQDRTNHVEG) are compositionally biased toward basic and acidic residues. Residues 1–22 (MEQDRTNHVEGNRLSPFLIPSP) form a disordered region. A phosphoserine mark is found at serine 15, serine 75, and serine 99. Residues 113 to 124 (KQDQKANGERRN) are compositionally biased toward basic and acidic residues. Disordered regions lie at residues 113 to 154 (KQDQ…VSSV), 266 to 287 (HPSH…LPPK), 349 to 368 (GEEF…GSSE), 390 to 488 (DSFS…VNRN), 703 to 748 (LNQQ…QQKL), 930 to 949 (VPDQ…TQKH), and 1075 to 1095 (DSHT…PTKR). Polar residues-rich tracts occupy residues 126–143 (GVSQ…NVSD) and 267–283 (PSHT…SNSE). Residues 397-416 (TPPPPSQLLLSPPPPLPQVP) show a composition bias toward pro residues. Polar residues-rich tracts occupy residues 479–488 (RPQNNCVNRN) and 703–718 (LNQQ…NSHL). A compositionally biased stretch (low complexity) spans 731 to 748 (QPSQSSHLPQNQQQQQKL). 2 stretches are compositionally biased toward polar residues: residues 935 to 944 (GSHTQTPPQK) and 1081 to 1095 (LEQQ…PTKR). Serine 1107 and serine 1109 each carry phosphoserine. Residues cysteine 1133, cysteine 1135, cysteine 1193, histidine 1219, and cysteine 1221 each contribute to the Zn(2+) site. Arginine 1261 contributes to the 2-oxoglutarate binding site. Zn(2+) is bound by residues cysteine 1271, cysteine 1273, cysteine 1289, and cysteine 1298. The segment at 1290–1303 (SWSMYYNGCKFARS) is interaction with DNA. Lysine 1299 is covalently cross-linked (Glycyl lysine isopeptide (Lys-Gly) (interchain with G-Cter in ubiquitin)). Residue cysteine 1358 coordinates Zn(2+). Cysteine 1374 is a 2-oxoglutarate binding site. Position 1380 (histidine 1380) interacts with Zn(2+). Histidine 1382 and aspartate 1384 together coordinate Fe cation. Substrate is bound at residue asparagine 1387. Residue histidine 1416 participates in 2-oxoglutarate binding. Disordered stretches follow at residues 1475–1507 (AAEK…NASQ) and 1521–1587 (VMQQ…HTSD). Residues 1477–1487 (EKLSSLENSSN) show a composition bias toward low complexity. The span at 1496 to 1507 (PSRTKQTENASQ) shows a compositional bias: polar residues. 2 stretches are compositionally biased toward low complexity: residues 1523 to 1532 (QQSQQPQPLQ) and 1539 to 1551 (QQQQ…QPHH). Polar residues predominate over residues 1554-1568 (TESVNSYSASGSTNP). Asymmetric dimethylarginine is present on arginine 1682. Histidine 1881 lines the Fe cation pocket. 2-oxoglutarate is bound at residue 1896–1898 (RIS). Position 1902–1904 (1902–1904 (YQH)) interacts with substrate. Histidine 1912 contributes to the Zn(2+) binding site. The disordered stretch occupies residues 1932–1961 (CEKYGPDYVPQKSHGKKVKREPAEPHETSE). Residues 1951–1960 (REPAEPHETS) are compositionally biased toward basic and acidic residues.

This sequence belongs to the TET family. Interacts with HCFC1. Interacts with OGT. Interacts with PROSER1; this interaction mediates TET2 O-GlcNAcylation and stability by promoting the interaction between OGT and TET2. Directly interacts (via C-terminus) with the DCAF1 component of the CRL4(VprBP) E3 ubiquitin-protein ligase complex. Fe(2+) serves as cofactor. Requires Zn(2+) as cofactor. Post-translationally, may be glycosylated. It is unclear whether interaction with OGT leads to GlcNAcylation. According to a report, it is not GlcNAcylated by OGT. In contrast, another group reports GlcNAcylation by OGT in mouse ortholog. Monoubiquitinated at Lys-1299 by the DCX (DDB1-CUL4-X-box) E3 ubiquitin-protein ligase complex called CRL4(VprBP) or CUL4A-RBX1-DDB1-DCAF1/VPRBP complex; this modification promotes binding to DNA. In terms of processing, acetylated. Deacetylase HDAC6 acts as a valine sensor by binding to valine through its primate-specific SE14 repeat region and deacetylates TET2 following valine deprivation which promotes TET2-dependent DNA demethylation. Broadly expressed. Highly expressed in hematopoietic cells; highest expression observed in granulocytes. Expression is reduced in granulocytes from peripheral blood of patients affected by myelodysplastic syndromes.

The protein resides in the nucleus. It localises to the chromosome. The catalysed reaction is a 5-methyl-2'-deoxycytidine in DNA + 2-oxoglutarate + O2 = a 5-hydroxymethyl-2'-deoxycytidine in DNA + succinate + CO2. It carries out the reaction a 5-hydroxymethyl-2'-deoxycytidine in DNA + 2-oxoglutarate + O2 = a 5-formyl-2'-deoxycytidine in DNA + succinate + CO2 + H2O. The enzyme catalyses a 5-formyl-2'-deoxycytidine in DNA + 2-oxoglutarate + O2 = a 5-carboxyl-2'-deoxycytidine in DNA + succinate + CO2 + H(+). In terms of biological role, dioxygenase that catalyzes the conversion of the modified genomic base 5-methylcytosine (5mC) into 5-hydroxymethylcytosine (5hmC) and plays a key role in active DNA demethylation. Has a preference for 5-hydroxymethylcytosine in CpG motifs. Also mediates subsequent conversion of 5hmC into 5-formylcytosine (5fC), and conversion of 5fC to 5-carboxylcytosine (5caC). Conversion of 5mC into 5hmC, 5fC and 5caC probably constitutes the first step in cytosine demethylation. Methylation at the C5 position of cytosine bases is an epigenetic modification of the mammalian genome which plays an important role in transcriptional regulation. In addition to its role in DNA demethylation, also involved in the recruitment of the O-GlcNAc transferase OGT to CpG-rich transcription start sites of active genes, thereby promoting histone H2B GlcNAcylation by OGT. The sequence is that of Methylcytosine dioxygenase TET2 (TET2) from Homo sapiens (Human).